Reading from the N-terminus, the 545-residue chain is Germacrene D synthase 1 (545 aa).

The Mg(2+) site is built by Asp298, Asp302, Asn443, and Glu451. Positions 298–302 (DDTFD) match the DDXXD motif motif.

This sequence belongs to the terpene synthase family. Requires Mg(2+) as cofactor.

It is found in the cytoplasm. The protein localises to the cytosol. It catalyses the reaction (2E,6E)-farnesyl diphosphate = (-)-germacrene D + diphosphate. It participates in secondary metabolite biosynthesis; terpenoid biosynthesis. Sesquiterpene synthase involved in germacrene D biosynthesis. Also produces at least 13 additional sesquiterpene products, including germacrene C and (+)-germacrene A, beta-ylangene, (E)-beta-farnesene and (E,E)-alpha-farnesene. The sequence is that of Germacrene D synthase 1 from Pogostemon cablin (Patchouli).